A 506-amino-acid polypeptide reads, in one-letter code: Thyroid hormone receptor alpha (506 aa).

The segment at 1 to 32 (MEQKPSKVECGSDPEENSARSPDGKRKRKNGQ) is disordered. A modulating region spans residues 1 to 52 (MEQKPSKVECGSDPEENSARSPDGKRKRKNGQCSLKTSMSGYIPSYLDKDEQ). Positions 53, 56, 70, 73, 91, 97, 107, and 110 each coordinate Zn(2+). NR C4-type zinc fingers lie at residues 53 to 73 (CVVC…CEGC) and 91 to 115 (CKYD…FKKC). Residues 53-127 (CVVCGDKATG…VGMAMDLVLD (75 aa)) constitute a DNA-binding region (nuclear receptor). Residues 163 to 407 (EEWDLIHVAT…EGQQLLGMHV (245 aa)) enclose the NR LBD domain. 2 residues coordinate 3,3',5-triiodo-L-thyronine: Arg228 and Ser277. Positions 460–506 (GEDDSSEAGSLTSSDEDPEVCEDAAQATQPLPEAPPRADGEGGGGGS) are disordered.

This sequence belongs to the nuclear hormone receptor family. NR1 subfamily. Binds DNA as a dimer; homodimer and heterodimer with RXRB. Interacts with NCOA3 and NCOA6 coactivators, leading to a strong increase of transcription of target genes. Probably interacts with SFPQ. Interacts with C1D. Interacts with AKAP13. Interacts with TP53INP2. Interacts with PER2. Interacts with PER2. Isoform alpha-2 and isoform alpha-1 interact with TACC1, but the interaction with alpha-1 is weaker. The interaction with isoform alpha-1, but not alpha-2, is decreased in the presence of thyroid hormone T3.

It is found in the nucleus. It localises to the cytoplasm. Functionally, nuclear hormone receptor that can act as a repressor or activator of transcription. High affinity receptor for thyroid hormones, including triiodothyronine and thyroxine. This chain is Thyroid hormone receptor alpha (THRA), found in Sus scrofa (Pig).